Reading from the N-terminus, the 55-residue chain is ATP synthase protein 8 (55 aa).

Residues 7-24 (NPWFFIMIISWLTYSMII) traverse the membrane as a helical segment. The interval 34 to 55 (TNPPARKEPTTNTTTPWNWPWT) is disordered. Positions 43–55 (TTNTTTPWNWPWT) are enriched in low complexity.

This sequence belongs to the ATPase protein 8 family. In terms of assembly, F-type ATPases have 2 components, CF(1) - the catalytic core - and CF(0) - the membrane proton channel.

The protein localises to the mitochondrion membrane. In terms of biological role, mitochondrial membrane ATP synthase (F(1)F(0) ATP synthase or Complex V) produces ATP from ADP in the presence of a proton gradient across the membrane which is generated by electron transport complexes of the respiratory chain. F-type ATPases consist of two structural domains, F(1) - containing the extramembraneous catalytic core and F(0) - containing the membrane proton channel, linked together by a central stalk and a peripheral stalk. During catalysis, ATP synthesis in the catalytic domain of F(1) is coupled via a rotary mechanism of the central stalk subunits to proton translocation. Part of the complex F(0) domain. Minor subunit located with subunit a in the membrane. The chain is ATP synthase protein 8 (MT-ATP8) from Vireo altiloquus (Black-whiskered vireo).